A 550-amino-acid polypeptide reads, in one-letter code: Keratin, type II cytoskeletal 74 (550 aa).

Residues 1-140 (MSRQLNIKSG…DPEIQKVRAQ (140 aa)) form a head region. The coil 1A stretch occupies residues 141–176 (EREQIMALNNKFASFIDKVRFLEQQNQVLGTKWELL). Residues 141–468 (EREQIMALNN…KLLEGEECWM (328 aa)) enclose the IF rod domain. The tract at residues 177–195 (QQMDLNNCRKNLEPILEGY) is linker 1. The coil 1B stretch occupies residues 196–287 (IGNLRKQLEM…CLYDAEVAQI (92 aa)). The interval 288 to 311 (QTHTSETSVILSMDNNRYLDLDSI) is linker 12. The coil 2 stretch occupies residues 312-464 (IAEVRAQYED…ATYSKLLEGE (153 aa)). A tail region spans residues 465–550 (ECWMSGENPS…VSSRARKAAR (86 aa)). The interval 491–550 (HPGSSASTDLGASTMASTGTSSSSSTQSGQTRAKGARVGDPKDSQDKSTPVSSRARKAAR) is disordered. Residues 502–521 (ASTMASTGTSSSSSTQSGQT) are compositionally biased toward low complexity. Basic and acidic residues predominate over residues 527 to 536 (RVGDPKDSQD).

It belongs to the intermediate filament family. As to quaternary structure, heterotetramer of two type I and two type II keratins.

Functionally, has a role in hair formation. Specific component of keratin intermediate filaments in the inner root sheath (IRS) of the hair follicle. The sequence is that of Keratin, type II cytoskeletal 74 (KRT74) from Bos taurus (Bovine).